The primary structure comprises 231 residues: ATP phosphoribosyltransferase (231 aa).

The protein belongs to the ATP phosphoribosyltransferase family. Short subfamily. As to quaternary structure, heteromultimer composed of HisG and HisZ subunits.

The protein localises to the cytoplasm. The enzyme catalyses 1-(5-phospho-beta-D-ribosyl)-ATP + diphosphate = 5-phospho-alpha-D-ribose 1-diphosphate + ATP. The protein operates within amino-acid biosynthesis; L-histidine biosynthesis; L-histidine from 5-phospho-alpha-D-ribose 1-diphosphate: step 1/9. Catalyzes the condensation of ATP and 5-phosphoribose 1-diphosphate to form N'-(5'-phosphoribosyl)-ATP (PR-ATP). Has a crucial role in the pathway because the rate of histidine biosynthesis seems to be controlled primarily by regulation of HisG enzymatic activity. The protein is ATP phosphoribosyltransferase of Brucella ovis (strain ATCC 25840 / 63/290 / NCTC 10512).